A 906-amino-acid chain; its full sequence is MSPLTSSLLLFSLLTSSLEAIPVLQPSFPPSSPSPAPSPGVRILRAPESIVAPLGDEVVFECETSLQPEGFEWSYRRWPNAANSNGSVGASRFKYLKSGNGKLNVTQETAISRLRVLVRPDTVGEYRCIGWFGPLVVTSTTARLELANTSVKGRQETHLQWRVAPGNSVLWSCGQQVHSNPSASWSYYRNGVEIKPELAATNGNLFLTNVSTASAGKYTCLATNPASGARIEISSSMVLEVLSGRGSQNKAPHLLSGQPTSQAVTIREGSTLLLLCPGVGSPTPTAVWSSPDVVEAIHNKRTRVLNHGLEISNVQGHDTGTYICYLDNGVRPTLEHFINVTVEVPPRITRPPWADLTNEGERMQLECEATGVPAPELYWLLNGESSINDTEAEQLPNGYLVLHSVQKRHAGYVQCFARNRLGEQSAGTLLQVNPKQIQSEPRETGSGGGFGSHRSMKPVNHGQKPTKMIPPSPPNVTRLSDESVMLRWHVPRNDGLLILFFKVQYRMISEGKRKNWQTTNDNIPYGKPKWNSELGKSFTASVTDLKPQRTYRFRILAVYSNNDNKESNTSAKFYLQPGAALEPMPVPELLEIEEYSETAVVLHWRLDSDADEHLITGYYAYYRPSSSAGEYYKATIEGAHARSFQIATLEAATIYEFKLQSFSAVSASEFSALKQGRTQRPRASTTEEPTIQGIGDRDTTSHNQPSHNETVSMSPMLTGTIGGGALLLILLVSAFLCMCRRRSPRGRGQTQNKPRMAELREDFVPLGSCSPNKQRQRTRHIHITLNPLAQQQQQQLDEKNPPGLETDNDMAYFQRQPTYEYDPGLRRMSSSSLRRSQRTLERAGGANSGGNNGGNNNNLNQSSEAGTADGPCMQSSSKPGRVIMKRPRLSSRSENLSSGSLNSVGV.

The first 20 residues, 1 to 20 (MSPLTSSLLLFSLLTSSLEA), serve as a signal peptide directing secretion. The Extracellular segment spans residues 21–715 (IPVLQPSFPP…SHNETVSMSP (695 aa)). Ig-like C2-type domains lie at 39 to 144 (PGVR…TARL), 134 to 236 (PLVV…ISSS), 252 to 341 (PHLL…INVT), and 346 to 433 (PRIT…LQVN). Cysteine 62 and cysteine 128 are joined by a disulfide. N-linked (GlcNAc...) asparagine glycans are attached at residues asparagine 85, asparagine 104, asparagine 148, and asparagine 209. 2 cysteine pairs are disulfide-bonded: cysteine 173–cysteine 220 and cysteine 276–cysteine 324. 2 N-linked (GlcNAc...) asparagine glycosylation sites follow: asparagine 339 and asparagine 388. Cysteine 367 and cysteine 415 are disulfide-bonded. A compositionally biased stretch (polar residues) spans 427–439 (GTLLQVNPKQIQS). The tract at residues 427 to 476 (GTLLQVNPKQIQSEPRETGSGGGFGSHRSMKPVNHGQKPTKMIPPSPPNV) is disordered. Fibronectin type-III domains follow at residues 470-578 (PPSP…LQPG) and 586-681 (VPEL…TQRP). The N-linked (GlcNAc...) asparagine glycan is linked to asparagine 475. Arginine 506, lysine 512, lysine 514, and arginine 552 together coordinate heparin. Asparagine 568 carries an N-linked (GlcNAc...) asparagine glycan. A disordered region spans residues 673-713 (LKQGRTQRPRASTTEEPTIQGIGDRDTTSHNQPSHNETVSM). Polar residues-rich tracts occupy residues 676-689 (GRTQ…TEEP) and 701-713 (SHNQ…TVSM). A helical transmembrane segment spans residues 716–736 (MLTGTIGGGALLLILLVSAFL). The Cytoplasmic segment spans residues 737-906 (CMCRRRSPRG…SSGSLNSVGV (170 aa)). The disordered stretch occupies residues 789-906 (AQQQQQQLDE…SSGSLNSVGV (118 aa)). Low complexity-rich tracts occupy residues 854 to 866 (GNNN…SEAG) and 890 to 906 (SSRS…SVGV).

This sequence belongs to the immunoglobulin superfamily. IHOG family. In terms of assembly, homodimer. Heterotetramer; 2 iHog chains bind 2 hh chains when facilitated by heparin, heparin is required to promote high-affinity interactions between hh and iHog.

The protein resides in the membrane. Its function is as follows. Mediates response to the active Hedgehog (Hh) protein signal in embryos, functioning upstream or at the level of patched (ptc). This chain is Interference hedgehog, found in Drosophila persimilis (Fruit fly).